The sequence spans 418 residues: rRNA methyltransferase 3, mitochondrial (418 aa).

The N-terminal 40 residues, 1 to 40 (MAAPAKGMWCSLGSLLRVVQTRDLNARRWVRALRRSPVRV), are a transit peptide targeting the mitochondrion. Residues 41–90 (LSPSGQVEERKRAPDQQPRKAVPKASSQGQRQKQPLETSPSQTPHTWEEA) form a disordered region. Basic and acidic residues predominate over residues 47–58 (VEERKRAPDQQP). Over residues 65 to 85 (ASSQGQRQKQPLETSPSQTPH) the composition is skewed to polar residues. 3 residues coordinate S-adenosyl-L-methionine: G354, I378, and L387.

This sequence belongs to the class IV-like SAM-binding methyltransferase superfamily. RNA methyltransferase TrmH family.

It localises to the mitochondrion. The catalysed reaction is guanosine(1370) in 16S rRNA + S-adenosyl-L-methionine = 2'-O-methylguanosine(1370) in 16S rRNA + S-adenosyl-L-homocysteine + H(+). Functionally, S-adenosyl-L-methionine-dependent 2'-O-ribose methyltransferase that catalyzes the formation of 2'-O-methylguanosine at position 1370 (Gm1370) in the 16S mitochondrial large subunit ribosomal RNA (mtLSU rRNA), a conserved modification in the peptidyl transferase domain of the mtLSU rRNA. Also required for formation of 2'-O-methyluridine at position 1369 (Um1369) mediated by MRM2. The protein is rRNA methyltransferase 3, mitochondrial of Mus musculus (Mouse).